The primary structure comprises 221 residues: UPF0758 protein YicR (221 aa).

The region spanning 99–221 is the MPN domain; sequence ALLSPEMTRE…YVSFAERGWI (123 aa). Zn(2+) contacts are provided by His170, His172, and Asp183. A JAMM motif motif is present at residues 170 to 183; it reads HNHPSGCAEPSKAD.

Belongs to the UPF0758 family. YicR subfamily.

This Salmonella paratyphi A (strain ATCC 9150 / SARB42) protein is UPF0758 protein YicR.